Here is a 341-residue protein sequence, read N- to C-terminus: HTH-type transcriptional repressor PurR (341 aa).

The HTH lacI-type domain occupies 2–56; it reads ATIKDVAKHAGVSTTTVSHVINKTRFVAENTKAAVWAAIKELHYSPSAVARSLKV. Positions 4 to 23 form a DNA-binding region, H-T-H motif; it reads IKDVAKHAGVSTTTVSHVIN. The DNA-binding element occupies 48–56; sequence SAVARSLKV. Residues Tyr73, Arg190, Thr192, Phe221, and Asp275 each coordinate hypoxanthine.

Homodimer.

The protein operates within purine metabolism; purine nucleotide biosynthesis [regulation]. Its function is as follows. Is the main repressor of the genes involved in the de novo synthesis of purine nucleotides, regulating purB, purC, purEK, purF, purHD, purL, purMN and guaBA expression. PurR is allosterically activated to bind its cognate DNA by binding the purine corepressors, hypoxanthine or guanine, thereby effecting transcription repression. The protein is HTH-type transcriptional repressor PurR of Yersinia pseudotuberculosis serotype O:1b (strain IP 31758).